The primary structure comprises 363 residues: Dihydroorotate dehydrogenase (quinone) (363 aa).

FMN contacts are provided by residues 67–71 and T91; that span reads AGLDK. Residue K71 participates in substrate binding. 116–120 contributes to the substrate binding site; the sequence is NRMGF. Residues N145 and N178 each contribute to the FMN site. N178 serves as a coordination point for substrate. The active-site Nucleophile is the S181. Residue N183 participates in substrate binding. Positions 219 and 247 each coordinate FMN. Substrate is bound at residue 248–249; sequence NT. FMN contacts are provided by residues G268, G297, and 318–319; that span reads YT.

Belongs to the dihydroorotate dehydrogenase family. Type 2 subfamily. Monomer. It depends on FMN as a cofactor.

It is found in the cell membrane. It catalyses the reaction (S)-dihydroorotate + a quinone = orotate + a quinol. It functions in the pathway pyrimidine metabolism; UMP biosynthesis via de novo pathway; orotate from (S)-dihydroorotate (quinone route): step 1/1. In terms of biological role, catalyzes the conversion of dihydroorotate to orotate with quinone as electron acceptor. The protein is Dihydroorotate dehydrogenase (quinone) of Myxococcus xanthus (strain DK1622).